Here is a 178-residue protein sequence, read N- to C-terminus: Cytochrome b6-f complex iron-sulfur subunit (178 aa).

Residues 20 to 42 (LLTFGTATGVALGALYPVANFFM) traverse the membrane as a helical segment. One can recognise a Rieske domain in the interval 71-161 (NHPAGDRSLV…IDIDDDNVLV (91 aa)). 4 residues coordinate [2Fe-2S] cluster: Cys107, His109, Cys125, and His128. A disulfide bond links Cys112 and Cys127.

Belongs to the Rieske iron-sulfur protein family. As to quaternary structure, the 4 large subunits of the cytochrome b6-f complex are cytochrome b6, subunit IV (17 kDa polypeptide, PetD), cytochrome f and the Rieske protein, while the 4 small subunits are PetG, PetL, PetM and PetN. The complex functions as a dimer. Requires [2Fe-2S] cluster as cofactor.

The protein resides in the cellular thylakoid membrane. The catalysed reaction is 2 oxidized [plastocyanin] + a plastoquinol + 2 H(+)(in) = 2 reduced [plastocyanin] + a plastoquinone + 4 H(+)(out). In terms of biological role, component of the cytochrome b6-f complex, which mediates electron transfer between photosystem II (PSII) and photosystem I (PSI), cyclic electron flow around PSI, and state transitions. The protein is Cytochrome b6-f complex iron-sulfur subunit of Prochlorococcus marinus (strain SARG / CCMP1375 / SS120).